An 860-amino-acid chain; its full sequence is DNA mismatch repair protein MutS (860 aa).

Residue 607-614 participates in ATP binding; that stretch reads GPNMSGKS.

The protein belongs to the DNA mismatch repair MutS family.

Functionally, this protein is involved in the repair of mismatches in DNA. It is possible that it carries out the mismatch recognition step. This protein has a weak ATPase activity. This Listeria monocytogenes serovar 1/2a (strain ATCC BAA-679 / EGD-e) protein is DNA mismatch repair protein MutS.